The sequence spans 228 residues: MDEEAAIDRLPLDLLAYIFSLATSFTVLAQASGVCKKWRKAVNQSMARRETLSFAGWKMDDDSTSRLVHLAFNLKELDISRSRWGCHITDNGLYQIASARCVSNLNSVSLWGMTAITDSGVVQLISRTSSLQHLNIGGTFITDESLFAIAERCHQLKTIGMWCCRHVTERGLLVLVNKCRKLESINLWGTRVPVDCFIALLTISPALQIKPMELLLNAQNPPPLLHAV.

The F-box domain occupies 4-51 (EAAIDRLPLDLLAYIFSLATSFTVLAQASGVCKKWRKAVNQSMARRET).

The protein is F-box protein At5g67140 of Arabidopsis thaliana (Mouse-ear cress).